The primary structure comprises 1214 residues: RNA-directed RNA polymerase VP1 (1214 aa).

One can recognise a RdRp catalytic domain in the interval 610 to 805 (APHDVMAPQL…KRTIVGNNVA (196 aa)).

The protein belongs to the reoviridae RNA-directed RNA polymerase family.

The protein resides in the virion. It catalyses the reaction RNA(n) + a ribonucleoside 5'-triphosphate = RNA(n+1) + diphosphate. In terms of biological role, RNA-directed RNA polymerase that is involved in transcription and genome replication. Following infection, it catalyzes the synthesis of fully conservative plus strands. After core assembly, which consists in recruitment of one capped plus-strand for each genomic segments and polymerase complexes, the polymerase switches mode and catalyzes the synthesis of complementary minus-strands. This is RNA-directed RNA polymerase VP1 (Segment-1) from Banna virus (BAV).